A 166-amino-acid chain; its full sequence is Large ribosomal subunit protein uL10 (166 aa).

This sequence belongs to the universal ribosomal protein uL10 family. In terms of assembly, part of the ribosomal stalk of the 50S ribosomal subunit. The N-terminus interacts with L11 and the large rRNA to form the base of the stalk. The C-terminus forms an elongated spine to which L12 dimers bind in a sequential fashion forming a multimeric L10(L12)X complex.

Its function is as follows. Forms part of the ribosomal stalk, playing a central role in the interaction of the ribosome with GTP-bound translation factors. This is Large ribosomal subunit protein uL10 from Streptococcus agalactiae serotype V (strain ATCC BAA-611 / 2603 V/R).